The sequence spans 230 residues: CDP-diacylglycerol--inositol 3-phosphatidyltransferase (230 aa).

The Cytoplasmic segment spans residues 1–28 (MPSAKSSDLSPTKTNLESTTKQKVSVQD). Residues 29–51 (IFLYIPNLIGYLRIITAIISFLC) traverse the membrane as a helical segment. Residues 52 to 57 (MANHPV) lie on the Lumenal side of the membrane. A helical transmembrane segment spans residues 58–77 (ATLIFYGISGFLDAFDGYAA). Mg(2+)-binding residues include aspartate 70 and aspartate 73. The a CDP-1,2-diacyl-sn-glycerol site is built by glycine 74, arginine 78, and threonine 84. Topologically, residues 78–89 (RKFNQGTRFGAV) are cytoplasmic. The chain crosses the membrane as a helical span at residues 90 to 110 (LDMVTDRCATSSLIVYLGVLY). Mg(2+) is bound by residues aspartate 91 and aspartate 95. Aspartate 95 functions as the Proton acceptor in the catalytic mechanism. Residues 111 to 112 (PQ) lie on the Lumenal side of the membrane. The helical transmembrane segment at 113–133 (YTVFWQILVSLDLSSHYMHMY) threads the bilayer. Residues 134–161 (AMLSAGSTSHKNVDETQSKLLSLYYNNR) lie on the Cytoplasmic side of the membrane. Residues 162 to 182 (LVLFFVCLINELFYMAVYLHY) traverse the membrane as a helical segment. At 183-184 (YK) the chain is on the lumenal side. The chain crosses the membrane as a helical span at residues 185-205 (FFWLGTVMLVASTPIWLFKQI). Residues 206-230 (ANIIQLKNASLILARMDAHDHSKRD) are Cytoplasmic-facing.

It belongs to the CDP-alcohol phosphatidyltransferase class-I family. Mn(2+) is required as a cofactor. Requires Mg(2+) as cofactor.

It localises to the endoplasmic reticulum membrane. It carries out the reaction a CDP-1,2-diacyl-sn-glycerol + myo-inositol = a 1,2-diacyl-sn-glycero-3-phospho-(1D-myo-inositol) + CMP + H(+). Its activity is regulated as follows. Inhibited by calcium and zinc ions. Inhibited by nucleoside triphosphates and diphosphates. Its function is as follows. Catalyzes the synthesis of phosphatidylinositol (PtdIns). Required for proper membrane dynamics and cell wall integrity. This Candida albicans (strain SC5314 / ATCC MYA-2876) (Yeast) protein is CDP-diacylglycerol--inositol 3-phosphatidyltransferase.